The following is a 262-amino-acid chain: Global transcriptional regulator CodY (262 aa).

The interval 1-159 (MATLLEKTRK…ATTVIGVQLS (159 aa)) is GAF domain. Residues 207-226 (ASVIADKIGITRSVIVNALR) constitute a DNA-binding region (H-T-H motif).

The protein belongs to the CodY family.

The protein resides in the cytoplasm. In terms of biological role, DNA-binding global transcriptional regulator which is involved in the adaptive response to starvation and acts by directly or indirectly controlling the expression of numerous genes in response to nutrient availability. During rapid exponential growth, CodY is highly active and represses genes whose products allow adaptation to nutrient depletion. The polypeptide is Global transcriptional regulator CodY (Lactococcus lactis subsp. cremoris (strain SK11)).